The chain runs to 110 residues: Snake venom vascular endothelial growth factor toxin HF (110 aa).

A Pyrrolidone carboxylic acid modification is found at Gln1. Disulfide bonds link Cys14–Cys56, Cys45–Cys91, and Cys49–Cys93.

It belongs to the PDGF/VEGF growth factor family. Snake venom VEGF subfamily. Homodimer; disulfide-linked. Interacts with VEGF receptor-2 (KDR) with high affinity. Expressed by the venom gland.

Its subcellular location is the secreted. In terms of biological role, snake venom VEGFs that may contribute to venom dispersion and prey subjugation by inducing vascular permeability and hypotension. This protein induces an increase in capillary permeability after intradermal injection, as well as a drastic hypotensive effect after intravenous injection. The hypotension is mediated by nitric oxide (NO), which is produced by VEGF-activated endothelium NO synthase. Also induces angiogenesis in vitro, probably through VEGF receptor (KDR/VEGFR-2) signaling. This Vipera aspis aspis (Aspic viper) protein is Snake venom vascular endothelial growth factor toxin HF.